Here is a 348-residue protein sequence, read N- to C-terminus: L-asparaginase 2 (348 aa).

A signal peptide spans 1–22 (MEFFKKTALAALVMGFSGAALA). The Asparaginase/glutaminase domain maps to 24 to 348 (PNITILATGG…QQIQQIFNQY (325 aa)). The active-site O-isoaspartyl threonine intermediate is the Thr-34. Substrate contacts are provided by residues 80–81 (SQ) and 111–112 (TD). The cysteines at positions 99 and 127 are disulfide-linked.

It belongs to the asparaginase 1 family. As to quaternary structure, homotetramer.

The protein resides in the periplasm. The catalysed reaction is L-asparagine + H2O = L-aspartate + NH4(+). This Escherichia coli (strain K12) protein is L-asparaginase 2 (ansB).